A 101-amino-acid chain; its full sequence is ATP-dependent Clp protease adapter protein ClpS (101 aa).

It belongs to the ClpS family. As to quaternary structure, binds to the N-terminal domain of the chaperone ClpA.

In terms of biological role, involved in the modulation of the specificity of the ClpAP-mediated ATP-dependent protein degradation. The sequence is that of ATP-dependent Clp protease adapter protein ClpS from Treponema denticola (strain ATCC 35405 / DSM 14222 / CIP 103919 / JCM 8153 / KCTC 15104).